The chain runs to 315 residues: Shiga-like toxin 1 subunit A (315 aa).

The N-terminal stretch at 1 to 22 is a signal peptide; that stretch reads MKIIIFRVLTFFFVIFSVNVVA. The A1 stretch occupies residues 23-273; the sequence is KEFTLDFSTA…CHHHASRVAR (251 aa). The active site involves Glu189. An intrachain disulfide couples Cys264 to Cys283. Residues 274–315 form an A2 region; the sequence is MASDEFPSMCPADGRVRGITHNKILWDSSTLGAILMRRTISS.

It belongs to the ribosome-inactivating protein family. Shiga-like toxin contains a single subunit A and five copies of subunit B.

The protein localises to the secreted. The enzyme catalyses Endohydrolysis of the N-glycosidic bond at one specific adenosine on the 28S rRNA.. Functionally, the A subunit is responsible for inhibiting protein synthesis through the catalytic inactivation of 60S ribosomal subunits. After endocytosis, the A subunit is cleaved by furin in two fragments, A1 and A2: A1 is the catalytically active fragment, and A2 is essential for holotoxin assembly with the B subunits. In Escherichia coli (Bacteriophage H19B), this protein is Shiga-like toxin 1 subunit A (stxA).